The sequence spans 481 residues: Aspartyl/glutamyl-tRNA(Asn/Gln) amidotransferase subunit B (481 aa).

It belongs to the GatB/GatE family. GatB subfamily. As to quaternary structure, heterotrimer of A, B and C subunits.

The enzyme catalyses L-glutamyl-tRNA(Gln) + L-glutamine + ATP + H2O = L-glutaminyl-tRNA(Gln) + L-glutamate + ADP + phosphate + H(+). It carries out the reaction L-aspartyl-tRNA(Asn) + L-glutamine + ATP + H2O = L-asparaginyl-tRNA(Asn) + L-glutamate + ADP + phosphate + 2 H(+). Allows the formation of correctly charged Asn-tRNA(Asn) or Gln-tRNA(Gln) through the transamidation of misacylated Asp-tRNA(Asn) or Glu-tRNA(Gln) in organisms which lack either or both of asparaginyl-tRNA or glutaminyl-tRNA synthetases. The reaction takes place in the presence of glutamine and ATP through an activated phospho-Asp-tRNA(Asn) or phospho-Glu-tRNA(Gln). This Pseudomonas putida (strain ATCC 700007 / DSM 6899 / JCM 31910 / BCRC 17059 / LMG 24140 / F1) protein is Aspartyl/glutamyl-tRNA(Asn/Gln) amidotransferase subunit B.